Consider the following 299-residue polypeptide: MTTVIDGKNVAASVIQTVKSATAALEKSSGVTTGLAVVIVGDDPASHAYVGSKGRMAKECGFKSVQHTLPADTKQEDLAALVAALNADPSIHGILVQLPLPKPLDSEAIIQSILPEKDVDGLSVVNAGKLATGDLKTGLVSCTPAGAMVFVRRTHGEDLSGLNAVVIGRSNLFGKPMAQLLLNANATVTIAHSRTKNLAEVCRNADILVAAVGRPEMVRADWVKPGATVIDVGINRVAAPETGEGKTRLVGDVAFEEVSAVASTITPVPGGVGPMTIAMLMANTVIAAHRTAGQTPPQF.

Residues 168–170 (GRS), Ser193, and Ile234 each bind NADP(+).

The protein belongs to the tetrahydrofolate dehydrogenase/cyclohydrolase family. Homodimer.

The catalysed reaction is (6R)-5,10-methylene-5,6,7,8-tetrahydrofolate + NADP(+) = (6R)-5,10-methenyltetrahydrofolate + NADPH. It catalyses the reaction (6R)-5,10-methenyltetrahydrofolate + H2O = (6R)-10-formyltetrahydrofolate + H(+). It functions in the pathway one-carbon metabolism; tetrahydrofolate interconversion. Catalyzes the oxidation of 5,10-methylenetetrahydrofolate to 5,10-methenyltetrahydrofolate and then the hydrolysis of 5,10-methenyltetrahydrofolate to 10-formyltetrahydrofolate. This Rhizobium johnstonii (strain DSM 114642 / LMG 32736 / 3841) (Rhizobium leguminosarum bv. viciae) protein is Bifunctional protein FolD.